The primary structure comprises 536 residues: Phosphoenolpyruvate carboxykinase (ATP) (536 aa).

Substrate-binding residues include R61, Y195, and K201. ATP-binding positions include K201, H220, and 236–244 (GLSGTGKTT). Mn(2+) contacts are provided by K201 and H220. Residue D257 coordinates Mn(2+). Positions 285, 322, and 447 each coordinate ATP. Residue R322 participates in substrate binding.

The protein belongs to the phosphoenolpyruvate carboxykinase (ATP) family. Requires Mn(2+) as cofactor.

The protein resides in the cytoplasm. The catalysed reaction is oxaloacetate + ATP = phosphoenolpyruvate + ADP + CO2. The protein operates within carbohydrate biosynthesis; gluconeogenesis. Its function is as follows. Involved in the gluconeogenesis. Catalyzes the conversion of oxaloacetate (OAA) to phosphoenolpyruvate (PEP) through direct phosphoryl transfer between the nucleoside triphosphate and OAA. The chain is Phosphoenolpyruvate carboxykinase (ATP) from Rhizobium johnstonii (strain DSM 114642 / LMG 32736 / 3841) (Rhizobium leguminosarum bv. viciae).